A 219-amino-acid polypeptide reads, in one-letter code: Dehydration-responsive element-binding protein 1F (219 aa).

Positions 1–45 (MDTEDTSSASSSSVSPPSSPGGGHHHRLPPKRRAGRKKFRETRHP) are disordered. Low complexity predominate over residues 7 to 16 (SSASSSSVSP). The segment covering 23–41 (GHHHRLPPKRRAGRKKFRE) has biased composition (basic residues). Residues 46–105 (VYRGVRARAGGSRWVCEVREPQAQARIWLGTYPTPEMAARAHDVAAIALRGERGAELNFP) constitute a DNA-binding region (AP2/ERF). Positions 134 to 161 (RRPPPPLALPEDPQEGTSGGGATATSGR) are disordered.

This sequence belongs to the AP2/ERF transcription factor family. ERF subfamily. In terms of tissue distribution, mostly expressed in developing seeds and apices.

Its subcellular location is the nucleus. Functionally, transcriptional activator that binds specifically to the DNA sequence 5'-[AG]CCGAC-3'. Binding to the C-repeat/DRE element mediates high salinity- and dehydration-inducible transcription. This chain is Dehydration-responsive element-binding protein 1F (DREB1F), found in Oryza sativa subsp. indica (Rice).